Reading from the N-terminus, the 162-residue chain is Caveolin-2 (162 aa).

Residues 1-86 (MGLETEKADV…FEISKYVMYK (86 aa)) lie on the Cytoplasmic side of the membrane. Residue Y19 is modified to Phosphotyrosine; by SRC. S20 and S23 each carry phosphoserine. Phosphotyrosine; by SRC is present on Y27. Residue S36 is modified to Phosphoserine. Residues 87–107 (FLTVFLAIPLAFIAGILFATL) constitute an intramembrane region (helical). The Cytoplasmic segment spans residues 108–162 (SCLHIWILMPFVKTCLMVLPSVQTIWKSVTDVFIAPLCTSIGRSFSSVSLQLSQD).

The protein belongs to the caveolin family. Monomer or homodimer. Interacts with CAV1; the interaction forms a stable heterooligomeric complex that is required for targeting to lipid rafts and for caveolae formation. Tyrosine phosphorylated forms do not form heterooligomers with the Tyr-19-phosphorylated form existing as a monomer or dimer, and the Tyr-27-form as a monomer only. Interacts (tyrosine phosphorylated form) with the SH2 domain-containing proteins, RASA1, NCK1 and SRC. Interacts (tyrosine phosphorylated form) with INSR, the interaction (Tyr-27-phosphorylated form) is increased on insulin stimulation. Interacts (Tyr-19 phosphorylated form) with MAPK1 (phosphorylated form); the interaction, promoted by insulin, leads to nuclear location and MAPK1 activation. Interacts with STAT3; the interaction is increased on insulin-induced tyrosine phosphorylation leading to STAT activation. Phosphorylated on serine and tyrosine residues. CAV1 promotes phosphorylation on Ser-23 which then targets the complex to the plasma membrane, lipid rafts and caveolae. Phosphorylation on Ser-36 appears to modulate mitosis in endothelial cells. Phosphorylation on both Tyr-19 and Tyr-27 is required for insulin-induced 'Ser-727' phosphorylation of STAT3 and its activation. Phosphorylation on Tyr-19 is required for insulin-induced phosphorylation of MAPK1 and DNA binding of STAT3. Tyrosine phosphorylation is induced by both EGF and insulin (By. similarity).

The protein localises to the nucleus. The protein resides in the cytoplasm. It localises to the golgi apparatus membrane. Its subcellular location is the cell membrane. It is found in the membrane. The protein localises to the caveola. Functionally, may act as a scaffolding protein within caveolar membranes. Interacts directly with G-protein alpha subunits and can functionally regulate their activity. Acts as an accessory protein in conjunction with CAV1 in targeting to lipid rafts and driving caveolae formation. The Ser-36 phosphorylated form has a role in modulating mitosis in endothelial cells. Positive regulator of cellular mitogenesis of the MAPK signaling pathway. Required for the insulin-stimulated nuclear translocation and activation of MAPK1 and STAT3, and the subsequent regulation of cell cycle progression. The protein is Caveolin-2 (CAV2) of Papio anubis (Olive baboon).